We begin with the raw amino-acid sequence, 1146 residues long: Sodium/hydrogen exchanger 7 (1146 aa).

Residues 1–28 (MTTVIDATMAYRFLEEATDSSSSSSSSK) are Extracellular-facing. Residues 29–49 (LESSPVDAVLFVGMSLVLGIA) form a helical membrane-spanning segment. The Cytoplasmic portion of the chain corresponds to 50–58 (SRHLLRGTR). A helical transmembrane segment spans residues 59–79 (VPYTVALLVIGIALGSLEYGA). Residues 80–99 (KHNLGKIGHGIRIWNEIDPE) lie on the Extracellular side of the membrane. Residues 100 to 120 (LLLAVFLPALLFESSFSMEVH) traverse the membrane as a helical segment. Residues 121 to 127 (QIKRCLG) lie on the Cytoplasmic side of the membrane. The helical transmembrane segment at 128–148 (QMVLLAVPGVLISTACLGSLV) threads the bilayer. Over 149–159 (KVTFPYEWDWK) the chain is Extracellular. The helical transmembrane segment at 160–180 (TSLLLGGLLSATDPVAVVALL) threads the bilayer. The Cytoplasmic portion of the chain corresponds to 181–191 (KELGASKKLST). A helical transmembrane segment spans residues 192-212 (IIEGESLMNDGTAIVVFQLFL). The Extracellular portion of the chain corresponds to 213-227 (KMAMGQNSDWSSIIK). The helical transmembrane segment at 228-250 (FLLKVALGAVGIGLAFGIASVIW) threads the bilayer. Over 251-253 (LKF) the chain is Cytoplasmic. The chain crosses the membrane as a helical span at residues 254 to 273 (IFNDTVIEITLTIAVSYFAY). Topologically, residues 274-278 (YTAQE) are extracellular. The helical transmembrane segment at 279–299 (WAGASGVLTVMTLGMFYAAFA) threads the bilayer. The Cytoplasmic segment spans residues 300–313 (RTAFKGDSQKSLHH). Residues 314-334 (FWEMVAYIANTLIFILSGVVI) form a helical membrane-spanning segment. At 335 to 352 (AEGILDSDKIAYQGNSWR) the chain is on the extracellular side. Residues 353-373 (FLFLLYVYIQLSRVVVVGVLY) form a helical membrane-spanning segment. Topologically, residues 374–387 (PLLCRFGYGLDWKE) are cytoplasmic. The helical transmembrane segment at 388 to 408 (SIILVWSGLRGAVALALSLSV) threads the bilayer. Residues 409–420 (KQSSGNSHISKE) lie on the Extracellular side of the membrane. A helical transmembrane segment spans residues 421–441 (TGTLFLFFTGGIVFLTLIVNG). The Cytoplasmic portion of the chain corresponds to 442–1146 (STTQFVLRLL…PSKIVFRNDL (705 aa)). Disordered regions lie at residues 981-1001 (LHRR…QLQR) and 1102-1128 (CQLP…DEDE). The span at 986–996 (SSLTPPRSSSS) shows a compositional bias: low complexity. Polar residues predominate over residues 1109 to 1118 (ESSTRQNTMV).

The protein belongs to the monovalent cation:proton antiporter 1 (CPA1) transporter (TC 2.A.36) family. In terms of assembly, interacts with CIPK24/SOS2 and CBL4/SOS3. In terms of processing, phosphorylated by CIPK24/SOS2 in complex with CBL4/SOS3. More expressed in roots than in shoots. Mostly localized in parenchyma cells at the xylem/symplast boundary in roots, hypocotyls, stems and leaves. Also present in root tips epidermal cells.

Its subcellular location is the cell membrane. It catalyses the reaction Na(+)(in) + H(+)(out) = Na(+)(out) + H(+)(in). The catalysed reaction is K(+)(in) + H(+)(out) = K(+)(out) + H(+)(in). Its function is as follows. Acts in electroneutral exchange of protons for cations such as Na(+) or Li(+) across plasma membrane. Involved in Na(+) and K(+) homeostasis. Required for cytoplasmic Na(+) and Li(+) detoxification by secreting them from the cytoplasm to the extracellular space. Regulates Na(+) content of the xylem sap. This Arabidopsis thaliana (Mouse-ear cress) protein is Sodium/hydrogen exchanger 7 (NHX7).